The chain runs to 626 residues: 1-deoxy-D-xylulose-5-phosphate synthase 2 (626 aa).

Thiamine diphosphate-binding positions include H74 and 115 to 117 (GHA). D146 lines the Mg(2+) pocket. Thiamine diphosphate-binding positions include 147–148 (GS), N175, F286, and E368. Residue N175 participates in Mg(2+) binding.

The protein belongs to the transketolase family. DXPS subfamily. In terms of assembly, homodimer. It depends on Mg(2+) as a cofactor. The cofactor is thiamine diphosphate.

It catalyses the reaction D-glyceraldehyde 3-phosphate + pyruvate + H(+) = 1-deoxy-D-xylulose 5-phosphate + CO2. It functions in the pathway metabolic intermediate biosynthesis; 1-deoxy-D-xylulose 5-phosphate biosynthesis; 1-deoxy-D-xylulose 5-phosphate from D-glyceraldehyde 3-phosphate and pyruvate: step 1/1. Catalyzes the acyloin condensation reaction between C atoms 2 and 3 of pyruvate and glyceraldehyde 3-phosphate to yield 1-deoxy-D-xylulose-5-phosphate (DXP). The polypeptide is 1-deoxy-D-xylulose-5-phosphate synthase 2 (Geobacter sulfurreducens (strain ATCC 51573 / DSM 12127 / PCA)).